Here is a 1653-residue protein sequence, read N- to C-terminus: Alpha-2-macroglobulin (1653 aa).

A signal peptide spans 1-17 (MKKLRVAACMLMLALAG). A lipid anchor (N-palmitoyl cysteine) is attached at Cys-18. Cys-18 carries the S-diacylglycerol cysteine lipid modification. Residues 1187-1190 (CLEQ) constitute a cross-link (isoglutamyl cysteine thioester (Cys-Gln)). Residues 1559-1589 (NQNLANGSASLEQSGGEVQNLLNQMQQASIK) adopt a coiled-coil conformation.

Belongs to the protease inhibitor I39 (alpha-2-macroglobulin) family. Bacterial alpha-2-macroglobulin subfamily. In terms of assembly, may form homooligomers.

The protein resides in the cell inner membrane. Its function is as follows. Protects the bacterial cell from host peptidases. Acts by a 'trapping' mechanism. Cleavage of the bait-region domain by host peptidases leads to a global conformational change, which results in entrapment of the host peptidase and activation of the thioester bond that covalently binds the attacking host peptidase. Trapped peptidases are still active except against very large substrates. May protect the entire periplam, including the lipoproteins anchored to the periplasmic side of the outer membrane, against intruding endopeptidases. This is Alpha-2-macroglobulin (yfhM) from Escherichia coli (strain K12).